Here is a 108-residue protein sequence, read N- to C-terminus: Large ribosomal subunit protein eL33A (108 aa).

The protein belongs to the eukaryotic ribosomal protein eL33 family. In terms of assembly, component of the large ribosomal subunit (LSU). Mature yeast ribosomes consist of a small (40S) and a large (60S) subunit. The 40S small subunit contains 1 molecule of ribosomal RNA (18S rRNA) and at least 33 different proteins. The large 60S subunit contains 3 rRNA molecules (25S, 5.8S and 5S rRNA) and at least 46 different proteins.

It is found in the cytoplasm. The protein resides in the nucleus. It localises to the nucleolus. Its function is as follows. Component of the ribosome, a large ribonucleoprotein complex responsible for the synthesis of proteins in the cell. The small ribosomal subunit (SSU) binds messenger RNAs (mRNAs) and translates the encoded message by selecting cognate aminoacyl-transfer RNA (tRNA) molecules. The large subunit (LSU) contains the ribosomal catalytic site termed the peptidyl transferase center (PTC), which catalyzes the formation of peptide bonds, thereby polymerizing the amino acids delivered by tRNAs into a polypeptide chain. The nascent polypeptides leave the ribosome through a tunnel in the LSU and interact with protein factors that function in enzymatic processing, targeting, and the membrane insertion of nascent chains at the exit of the ribosomal tunnel. This Schizosaccharomyces pombe (strain 972 / ATCC 24843) (Fission yeast) protein is Large ribosomal subunit protein eL33A (rpl35b).